A 90-amino-acid chain; its full sequence is DNA-binding protein HU (90 aa).

This sequence belongs to the bacterial histone-like protein family. Homodimer.

Histone-like DNA-binding protein which is capable of wrapping DNA to stabilize it, and thus to prevent its denaturation under extreme environmental conditions. This is DNA-binding protein HU (hup) from Pasteurella multocida (strain Pm70).